The following is a 168-amino-acid chain: Endoribonuclease YbeY (168 aa).

Zn(2+) is bound by residues His126, His130, and His136.

It belongs to the endoribonuclease YbeY family. Zn(2+) serves as cofactor.

Its subcellular location is the cytoplasm. Functionally, single strand-specific metallo-endoribonuclease involved in late-stage 70S ribosome quality control and in maturation of the 3' terminus of the 16S rRNA. The sequence is that of Endoribonuclease YbeY from Agrobacterium fabrum (strain C58 / ATCC 33970) (Agrobacterium tumefaciens (strain C58)).